The primary structure comprises 214 residues: Outer-membrane lipoprotein carrier protein (214 aa).

Positions 1–24 are cleaved as a signal peptide; it reads MKIKLAFAVLLALCLSLSVMPVLA.

This sequence belongs to the LolA family. As to quaternary structure, monomer.

The protein resides in the periplasm. Functionally, participates in the translocation of lipoproteins from the inner membrane to the outer membrane. Only forms a complex with a lipoprotein if the residue after the N-terminal Cys is not an aspartate (The Asp acts as a targeting signal to indicate that the lipoprotein should stay in the inner membrane). In Alkalilimnicola ehrlichii (strain ATCC BAA-1101 / DSM 17681 / MLHE-1), this protein is Outer-membrane lipoprotein carrier protein.